We begin with the raw amino-acid sequence, 249 residues long: Homeobox-leucine zipper protein HOX6 (249 aa).

Positions 1-32 (MDGEEDSEWMMMDVGGKGGKGGGGGGAADRKK) are disordered. The span at 15–27 (GGKGGKGGGGGGA) shows a compositional bias: gly residues. The homeobox DNA-binding region spans 27 to 86 (AADRKKRFSEEQIKSLESMFATQTKLEPRQKLQLARELGLQPRQVAIWFQNKRARWKSKQ). The segment at 85-129 (KQLEREYSALRDDYDALLCSYESLKKEKLALIKQLEKLAEMLQEP) is leucine-zipper. Residues 194 to 249 (FLRPSSQHHPPPPHAGAGFTSSEPAADHQSFNFHSSWPSSTEQTCSSTPWWEFESE) are disordered. A compositionally biased stretch (polar residues) spans 212-242 (FTSSEPAADHQSFNFHSSWPSSTEQTCSSTP).

The protein belongs to the HD-ZIP homeobox family. Class I subfamily. Expressed in seedlings, roots, leaves, nodes, internodes, flowers and embryo.

The protein localises to the nucleus. Functionally, probable transcription factor that binds to the DNA sequence 5'-CAAT[AT]ATTG-3'. The polypeptide is Homeobox-leucine zipper protein HOX6 (HOX6) (Oryza sativa subsp. indica (Rice)).